A 183-amino-acid polypeptide reads, in one-letter code: Ubiquitin-conjugating enzyme E2-21 kDa (183 aa).

The UBC core domain occupies 17–179 (TCMSRIVKEY…VKYFLAERER (163 aa)). Cys115 (glycyl thioester intermediate) is an active-site residue.

This sequence belongs to the ubiquitin-conjugating enzyme family.

The protein resides in the peroxisome. It carries out the reaction S-ubiquitinyl-[E1 ubiquitin-activating enzyme]-L-cysteine + [E2 ubiquitin-conjugating enzyme]-L-cysteine = [E1 ubiquitin-activating enzyme]-L-cysteine + S-ubiquitinyl-[E2 ubiquitin-conjugating enzyme]-L-cysteine.. Its pathway is protein modification; protein ubiquitination. In terms of biological role, catalyzes the covalent attachment of ubiquitin to other proteins. Essential for peroxisome biogenesis. Required for UBC4-independent ubiquitination of PEX5. This is Ubiquitin-conjugating enzyme E2-21 kDa (PEX4) from Saccharomyces cerevisiae (strain ATCC 204508 / S288c) (Baker's yeast).